A 123-amino-acid chain; its full sequence is Transmembrane protein 80 (123 aa).

Transmembrane regions (helical) follow at residues 2-22 (LFHLSGLYSALYFLATLLMIV), 35-55 (LALDLVLLLLMGILKVAQLYL), 68-88 (LAASLAFTAVGGLLSVHFLLW), and 102-122 (VLLVLHGLEAGLQVVVIADFI).

Its subcellular location is the membrane. The protein resides in the cell projection. It localises to the cilium. This is Transmembrane protein 80 (Tmem80) from Mus musculus (Mouse).